An 82-amino-acid chain; its full sequence is Colonization factor (82 aa).

A signal peptide spans 1-33 (MFSSLKNKLNTFKSTLSLGVFLLFSAFANQALA).

It localises to the secreted. The chain is Colonization factor (cep) from Vibrio cholerae serotype O1 (strain ATCC 39315 / El Tor Inaba N16961).